The primary structure comprises 506 residues: Glutamyl-tRNA(Gln) amidotransferase subunit A, mitochondrial (506 aa).

Active-site charge relay system residues include Lys-62 and Ser-141. The Acyl-ester intermediate role is filled by Ser-165.

The protein belongs to the amidase family. GatA subfamily. In terms of assembly, subunit of the heterotrimeric GatCAB amidotransferase (AdT) complex, composed of A, B and C subunits.

It localises to the mitochondrion. The enzyme catalyses L-glutamyl-tRNA(Gln) + L-glutamine + ATP + H2O = L-glutaminyl-tRNA(Gln) + L-glutamate + ADP + phosphate + H(+). Functionally, allows the formation of correctly charged Gln-tRNA(Gln) through the transamidation of misacylated Glu-tRNA(Gln) in the mitochondria. The reaction takes place in the presence of glutamine and ATP through an activated gamma-phospho-Glu-tRNA(Gln). The sequence is that of Glutamyl-tRNA(Gln) amidotransferase subunit A, mitochondrial from Emericella nidulans (strain FGSC A4 / ATCC 38163 / CBS 112.46 / NRRL 194 / M139) (Aspergillus nidulans).